Here is a 1402-residue protein sequence, read N- to C-terminus: Phospholipid-transporting ATPase dnf2 (1402 aa).

The next 4 membrane-spanning stretches (helical) occupy residues 109–129, 135–155, 457–477, and 501–521; these read FQNVANLFFLFLVILQSISIF, PGLAAVPLIVVVGITAVKDAI, LNFIILFSMCFVCAVVEGIAW, and VVTFFTGVILFQNLVPISLYI. Asp569 serves as the catalytic 4-aspartylphosphate intermediate. ATP-binding residues include Asp569, Lys570, Thr571, Glu700, Phe741, Ser743, Lys746, Lys764, Arg799, Thr800, Thr879, Gly880, Asp881, Arg986, and Lys992. Asp569 provides a ligand contact to Mg(2+). Residue Thr571 participates in Mg(2+) binding. Asp1012 contributes to the Mg(2+) binding site. ATP contacts are provided by Asn1015 and Asp1016. Residue Asp1016 coordinates Mg(2+). 6 helical membrane passes run 1066 to 1086, 1101 to 1121, 1151 to 1171, 1193 to 1213, 1218 to 1238, and 1260 to 1280; these read VAEMVNNFFYKSVVWTFTLFW, YTYVMLFNLIFSSLPVIVMGV, IFIGYMLDGFYQSVICFFFSF, LGVYVAAPTIMVVDTYVILNQ, VFSIGLWALSCLTFWFWTGVY, and FWAVLCGTIVSCLFPKFLFMT. Lys1275 lines the a 1,2-diacyl-sn-glycero-3-phospho-L-serine pocket.

It belongs to the cation transport ATPase (P-type) (TC 3.A.3) family. Type IV subfamily. Mg(2+) is required as a cofactor.

The protein localises to the cell membrane. The protein resides in the endoplasmic reticulum membrane. The enzyme catalyses ATP + H2O + phospholipidSide 1 = ADP + phosphate + phospholipidSide 2.. The catalysed reaction is a 1,2-diacyl-sn-glycero-3-phosphoethanolamine(out) + ATP + H2O = a 1,2-diacyl-sn-glycero-3-phosphoethanolamine(in) + ADP + phosphate + H(+). It carries out the reaction a 1,2-diacyl-sn-glycero-3-phosphocholine(out) + ATP + H2O = a 1,2-diacyl-sn-glycero-3-phosphocholine(in) + ADP + phosphate + H(+). It catalyses the reaction a beta-D-glucosyl-(1&lt;-&gt;1')-N-acylsphing-4-enine(out) + ATP + H2O = a beta-D-glucosyl-(1&lt;-&gt;1')-N-acylsphing-4-enine(in) + ADP + phosphate + H(+). The enzyme catalyses a 1,2-diacyl-sn-glycero-3-phospho-L-serine(out) + ATP + H2O = a 1,2-diacyl-sn-glycero-3-phospho-L-serine(in) + ADP + phosphate + H(+). Catalytic component of a P4-ATPase flippase complex which catalyzes the hydrolysis of ATP coupled to the transport of glucosylceramide, phosphatidylcholine, phosphatidylethanolamine, and small amounts of phosphatidylserine from the lumenal to the cytosolic leaflet of the cell membrane and ensures the maintenance of asymmetric distribution of phospholipids. This Schizosaccharomyces pombe (strain 972 / ATCC 24843) (Fission yeast) protein is Phospholipid-transporting ATPase dnf2.